The primary structure comprises 432 residues: Serine--tRNA ligase (432 aa).

236–238 (TSE) lines the L-serine pocket. ATP is bound at residue 267–269 (RSE). Glu-290 is a binding site for L-serine. 354 to 357 (EISS) is an ATP binding site. Residue Ser-390 coordinates L-serine.

It belongs to the class-II aminoacyl-tRNA synthetase family. Type-1 seryl-tRNA synthetase subfamily. In terms of assembly, homodimer. The tRNA molecule binds across the dimer.

It is found in the cytoplasm. It carries out the reaction tRNA(Ser) + L-serine + ATP = L-seryl-tRNA(Ser) + AMP + diphosphate + H(+). The catalysed reaction is tRNA(Sec) + L-serine + ATP = L-seryl-tRNA(Sec) + AMP + diphosphate + H(+). It participates in aminoacyl-tRNA biosynthesis; selenocysteinyl-tRNA(Sec) biosynthesis; L-seryl-tRNA(Sec) from L-serine and tRNA(Sec): step 1/1. Catalyzes the attachment of serine to tRNA(Ser). Is also able to aminoacylate tRNA(Sec) with serine, to form the misacylated tRNA L-seryl-tRNA(Sec), which will be further converted into selenocysteinyl-tRNA(Sec). In Pseudoalteromonas atlantica (strain T6c / ATCC BAA-1087), this protein is Serine--tRNA ligase.